The chain runs to 259 residues: Diphthine synthase (259 aa).

Residues leucine 9, aspartate 85, valine 88, 113 to 114, leucine 168, alanine 209, and histidine 234 each bind S-adenosyl-L-methionine; that span reads TA.

This sequence belongs to the diphthine synthase family. In terms of assembly, homodimer.

The enzyme catalyses 2-[(3S)-amino-3-carboxypropyl]-L-histidyl-[translation elongation factor 2] + 3 S-adenosyl-L-methionine = diphthine-[translation elongation factor 2] + 3 S-adenosyl-L-homocysteine + 3 H(+). The protein operates within protein modification; peptidyl-diphthamide biosynthesis. S-adenosyl-L-methionine-dependent methyltransferase that catalyzes the trimethylation of the amino group of the modified target histidine residue in translation elongation factor 2 (EF-2), to form an intermediate called diphthine. The three successive methylation reactions represent the second step of diphthamide biosynthesis. The polypeptide is Diphthine synthase (Haloarcula marismortui (strain ATCC 43049 / DSM 3752 / JCM 8966 / VKM B-1809) (Halobacterium marismortui)).